The sequence spans 664 residues: Macoilin (664 aa).

4 helical membrane-spanning segments follow: residues 28–48 (TFLY…DFVL), 75–95 (AFSV…LLFI), 120–140 (VCLP…AIRF), and 154–174 (FAAH…KSYV). The segment covering 253–265 (REKGKEKDKDAKK) has biased composition (basic and acidic residues). Positions 253–274 (REKGKEKDKDAKKHNLGINNNN) are disordered. Serine 305 is modified (phosphoserine). Positions 320-348 (KNYKNASGVVNSSPRSHSATNGSIPSSSS) are enriched in polar residues. The interval 320–375 (KNYKNASGVVNSSPRSHSATNGSIPSSSSKNEKKQKCTSKSPSTHKDLMENCIPNN) is disordered. The N-linked (GlcNAc...) asparagine glycan is linked to asparagine 324. Position 332 is a phosphoserine (serine 332). Residues asparagine 340 and asparagine 452 are each glycosylated (N-linked (GlcNAc...) asparagine). The interval 630–664 (TSPLSPVSPHYSSKFVETSPSGLDPNASVYQPLKK) is disordered. Phosphoserine occurs at positions 631 and 634. An N-linked (GlcNAc...) asparagine glycan is attached at asparagine 655.

This sequence belongs to the macoilin family.

The protein resides in the rough endoplasmic reticulum membrane. It localises to the nucleus membrane. In terms of biological role, plays a role in the regulation of neuronal activity. The sequence is that of Macoilin (MACO1) from Macaca mulatta (Rhesus macaque).